Here is a 498-residue protein sequence, read N- to C-terminus: Angiopoietin-1 (498 aa).

A signal peptide spans 1 to 19; that stretch reads MTVFLSFAFLAAILTHIGC. N-linked (GlcNAc...) asparagine glycosylation is found at Asn-92, Asn-122, Asn-154, Asn-243, and Asn-295. The stretch at 158–254 forms a coiled coil; that stretch reads RLEIQLLENS…SVLQKQQLEL (97 aa). Residues 277-497 enclose the Fibrinogen C-terminal domain; sequence KEEVKPFRDC…STTMMIRPLD (221 aa). Disulfide bonds link Cys-286–Cys-315 and Cys-439–Cys-452.

Homooligomer. Interacts with TEK/TIE2. Interacts with SVEP1/polydom. Interacts with THBD; this interaction significantly inhibits the generation of activated PC and TAFIa/CPB2 by the thrombin/thrombomodulin complex.

It localises to the secreted. Functionally, binds and activates TIE2 receptor by inducing its tyrosine phosphorylation. Implicated in endothelial developmental processes later and distinct from that of VEGF. Appears to play a crucial role in mediating reciprocal interactions between the endothelium and surrounding matrix and mesenchyme. Mediates blood vessel maturation/stability. It may play an important role in the heart early development. The sequence is that of Angiopoietin-1 (ANGPT1) from Sus scrofa (Pig).